Here is a 154-residue protein sequence, read N- to C-terminus: Ribosomal RNA large subunit methyltransferase H (154 aa).

Residues Gly103 and Phe122–Phe127 each bind S-adenosyl-L-methionine.

This sequence belongs to the RNA methyltransferase RlmH family. In terms of assembly, homodimer.

The protein localises to the cytoplasm. It catalyses the reaction pseudouridine(1915) in 23S rRNA + S-adenosyl-L-methionine = N(3)-methylpseudouridine(1915) in 23S rRNA + S-adenosyl-L-homocysteine + H(+). Functionally, specifically methylates the pseudouridine at position 1915 (m3Psi1915) in 23S rRNA. The polypeptide is Ribosomal RNA large subunit methyltransferase H (Caldicellulosiruptor bescii (strain ATCC BAA-1888 / DSM 6725 / KCTC 15123 / Z-1320) (Anaerocellum thermophilum)).